We begin with the raw amino-acid sequence, 924 residues long: Autophagy-related protein 9B (924 aa).

Positions 1–144 (MVSRMGWGGR…QDSPGLRVGP (144 aa)) are disordered. Topologically, residues 1 to 207 (MVSRMGWGGR…KIYSYHQRNG (207 aa)) are cytoplasmic. Residues 17 to 27 (WGDLGPGSVPL) are compositionally biased toward low complexity. The segment covering 28-40 (LPMPLPPPPPPSC) has biased composition (pro residues). A compositionally biased stretch (polar residues) spans 78–88 (LQGTGASQSCH). Low complexity predominate over residues 98-113 (PTQAQPAMTPASASPS). Positions 151–154 (YERL) match the Tyrosine-based sorting signal motif. The helical transmembrane segment at 208 to 228 (FACILLEDVFQLGQFIFIVTF) threads the bilayer. Topologically, residues 229-276 (TTFLLRCVDYNVLFANQPSNHTRPGPFHSKVTLSDAILPSAQCAERIR) are lumenal. Residues 277–297 (SSPLLVLLLVLAAGFWLVQLL) traverse the membrane as a helical segment. The Cytoplasmic portion of the chain corresponds to 298–438 (RSVCNLFSYW…GALAARWGRT (141 aa)). The stretch at 439–459 (VLLLAALNLALSPLVLAWQVL) is an intramembrane region. The Cytoplasmic portion of the chain corresponds to 460 to 526 (HVFYSHVELL…AAPPAPLRTL (67 aa)). The helical transmembrane segment at 527–547 (LARQLVFFAGALFAALLVLTV) threads the bilayer. Residues 548–551 (YDED) lie on the Lumenal side of the membrane. A helical membrane pass occupies residues 552–572 (VLAVEHVLTAMTALGVTATVA). Residues 573-624 (RSFIPEEQCQGRAPQLLLQTALAHMHYLPEEPGPGGRDRAYRQMAQLLQYRA) are Cytoplasmic-facing. The stretch at 625–645 (VSLLEELLSPLLTPLFLLFWF) is an intramembrane region. Residues 646 to 924 (RPRALEIIDF…KEPDRASCTD (279 aa)) lie on the Cytoplasmic side of the membrane. A disordered region spans residues 847–924 (QQEPWGEAAA…KEPDRASCTD (78 aa)). A compositionally biased stretch (low complexity) spans 878–890 (SWSSDGSSPASSP). A compositionally biased stretch (basic and acidic residues) spans 913-924 (TQKEPDRASCTD).

This sequence belongs to the ATG9 family. In terms of assembly, homotrimer; forms a homotrimer with a central pore that forms a path between the two membrane leaflets. As to expression, highly expressed in placenta (trophoblast cells) and pituitary gland. Not expressed in vascular endothelial.

It is found in the preautophagosomal structure membrane. The enzyme catalyses a 1,2-diacyl-sn-glycero-3-phosphocholine(in) = a 1,2-diacyl-sn-glycero-3-phosphocholine(out). It carries out the reaction a 1,2-diacyl-sn-glycero-3-phospho-L-serine(in) = a 1,2-diacyl-sn-glycero-3-phospho-L-serine(out). The catalysed reaction is a 1,2-diacyl-sn-glycero-3-phosphoethanolamine(in) = a 1,2-diacyl-sn-glycero-3-phosphoethanolamine(out). In terms of biological role, phospholipid scramblase involved in autophagy by mediating autophagosomal membrane expansion. Cycles between the preautophagosomal structure/phagophore assembly site (PAS) and the cytoplasmic vesicle pool and supplies membrane for the growing autophagosome. Lipid scramblase activity plays a key role in preautophagosomal structure/phagophore assembly by distributing the phospholipids that arrive through ATG2 (ATG2A or ATG2B) from the cytoplasmic to the luminal leaflet of the bilayer, thereby driving autophagosomal membrane expansion. In addition to autophagy, also plays a role in necrotic cell death. This Homo sapiens (Human) protein is Autophagy-related protein 9B (ATG9B).